The following is a 122-amino-acid chain: Large ribosomal subunit protein uL18 (122 aa).

Positions 1 to 25 (MSTLSRKQQTQKRHRRLRRHLSGTA) are disordered. The span at 9–21 (QTQKRHRRLRRHL) shows a compositional bias: basic residues.

The protein belongs to the universal ribosomal protein uL18 family. As to quaternary structure, part of the 50S ribosomal subunit; part of the 5S rRNA/L5/L18/L25 subcomplex. Contacts the 5S and 23S rRNAs.

Its function is as follows. This is one of the proteins that bind and probably mediate the attachment of the 5S RNA into the large ribosomal subunit, where it forms part of the central protuberance. The sequence is that of Large ribosomal subunit protein uL18 from Synechococcus sp. (strain CC9311).